The following is a 2822-amino-acid chain: Piezo-type mechanosensitive ion channel component 2 (2822 aa).

Topologically, residues 1-12 are cytoplasmic; the sequence is MASEVVCGLIFR. Residues 13–24 form a helical membrane-spanning segment; it reads LLLPICLAVACA. The Extracellular segment spans residues 25-30; the sequence is FRYNGL. The helical transmembrane segment at 31–43 threads the bilayer; that stretch reads SFVYLIYLLLIPL. Topologically, residues 44-50 are cytoplasmic; the sequence is FSEPTKA. The chain crosses the membrane as a helical span at residues 51–76; that stretch reads TMQGHTGRLLQSLCITSLSFLLLHII. Residues 77-122 lie on the Extracellular side of the membrane; the sequence is FHITLASLEAQHRITPAYNCSTWEKTFRQIGFESLKGADAGNGIRV. Asn95 carries an N-linked (GlcNAc...) asparagine glycan. Residues 123–141 traverse the membrane as a helical segment; sequence FVPDIGMFIASLTIWLVCR. Topologically, residues 142-221 are cytoplasmic; sequence TIVKKPDTEE…KEFIGNMITT (80 aa). The helical transmembrane segment at 222-237 threads the bilayer; that stretch reads AGKVVVTILLGSSGMM. Residues 238–240 are Extracellular-facing; it reads LPS. Residues 241-258 form a helical membrane-spanning segment; that stretch reads LTSAVYFFVFLGLCTWWS. Over 259–264 the chain is Cytoplasmic; it reads WCRTFD. The helical transmembrane segment at 265–287 threads the bilayer; it reads PLLFGCLCVLLAIFTAGHLIGLY. Topologically, residues 288 to 335 are extracellular; it reads LYQFQFFQEAVPPNDYYARLFGIKSVIQTDCASTWKIIVNPDLSWYHH. Residues 336–355 form a helical membrane-spanning segment; the sequence is ANPILLLVMYYTLATLIRIW. Topologically, residues 356-492 are cytoplasmic; sequence LQEPLVQEEM…SVRMHAMVAV (137 aa). The segment at 450–481 is disordered; it reads YRWEPSEESSEKKEEEEDKREDSEGEGSQEEK. Residues 455 to 482 adopt a coiled-coil conformation; the sequence is SEESSEKKEEEEDKREDSEGEGSQEEKR. Positions 463 to 477 are enriched in acidic residues; that stretch reads EEEEDKREDSEGEGS. A helical transmembrane segment spans residues 493-514; that stretch reads FQFIMKQSYICALIAMMAWSIT. At 515–519 the chain is on the extracellular side; it reads YHSWL. A helical membrane pass occupies residues 520–531; it reads TFVLLIWSCTLW. Residues 532-535 are Cytoplasmic-facing; that stretch reads MIRN. A helical transmembrane segment spans residues 536-562; the sequence is RRKYAMISSPFMVVYANLLLVLQYIWS. Topologically, residues 563 to 583 are extracellular; sequence FELPEIKKVPGFLEKKEPGEL. A helical membrane pass occupies residues 584–614; the sequence is ASKILFTITFWLLLRQHLTEQKALREKEALL. Residues 615–689 lie on the Cytoplasmic side of the membrane; sequence SEVKIGSQEL…GNLVVALFIK (75 aa). Composition is skewed to acidic residues over residues 624-633 and 643-652; these read LEEKEDEELQ and EKEEEEEEEI. The tract at residues 624-668 is disordered; the sequence is LEEKEDEELQDVQVEGEPTEKEEEEEEEIKEERHEVKKEEEEEVE. Residues 653-662 show a composition bias toward basic and acidic residues; that stretch reads KEERHEVKKE. A helical membrane pass occupies residues 690–703; that stretch reads YWIYVCGGMFFFVS. Residues 704–709 lie on the Extracellular side of the membrane; that stretch reads FEGKIV. Residues 710-728 form a helical membrane-spanning segment; sequence MYKIIYMVLFLFCVALYQV. The Cytoplasmic portion of the chain corresponds to 729-737; sequence HYEWWRKIL. The chain crosses the membrane as a helical span at residues 738–757; sequence KYFWMSVVIYTMLVLIFIYT. Residues 758 to 789 are Extracellular-facing; that stretch reads YQFENFPGLWQNMTGLKKEKLEDLGLKQFTVA. A helical membrane pass occupies residues 790–811; it reads ELFTRIFIPTSFLLVCILHLHY. Topologically, residues 812-957 are cytoplasmic; that stretch reads FHDRFLELTD…QVFMWWILEL (146 aa). At Ser856 the chain carries Phosphoserine. Over residues 875–901 the composition is skewed to basic and acidic residues; it reads QKLAESGEERPEECVKKTEKGEAGKDS. A disordered region spans residues 875-919; sequence QKLAESGEERPEECVKKTEKGEAGKDSDESEEEEDEEEESEEEES. Positions 902–919 are enriched in acidic residues; that stretch reads DESEEEEDEEEESEEEES. A helical membrane pass occupies residues 958 to 973; sequence HIIKIVSSYIIWVTVK. Residues 974–979 lie on the Extracellular side of the membrane; that stretch reads EVSLFN. A helical membrane pass occupies residues 980-989; sequence YVFLISWAFA. The Cytoplasmic segment spans residues 990–997; sequence LPYAKLRR. A helical membrane pass occupies residues 998-1018; it reads AASSVCTVWTCVIIVCKMLYQ. The Extracellular segment spans residues 1019-1074; the sequence is LQTIKPENFSVNCSLPNENQTNIPLHELNKSLLYSAPVDPTEWVGLRKSSPLLVYL. N-linked (GlcNAc...) asparagine glycosylation occurs at Asn1030. Cys1031 and Cys1209 are joined by a disulfide. A helical transmembrane segment spans residues 1075 to 1099; sequence RNNLLMLAILAFEVTVYRHQEYYRG. The Cytoplasmic segment spans residues 1100-1140; the sequence is RNNLTAPVSKTIFHDITRLHLDDGLINCAKYFVNYFFYKFG. The helical transmembrane segment at 1141–1155 threads the bilayer; sequence LETCFLMSVNVIGQR. Over 1156-1157 the chain is Extracellular; the sequence is MD. A helical transmembrane segment spans residues 1158–1171; sequence FYAMIHACWLIGVL. The Cytoplasmic segment spans residues 1172-1182; that stretch reads YRRRRKAIAEV. Residues 1183-1202 traverse the membrane as a helical segment; it reads WPKYCCFLACIITFQYFVCI. Over 1203-1239 the chain is Extracellular; sequence GIPPAPCRDYPWRFKGAYFNDNIIKWLYFPDFIVRPN. A helical membrane pass occupies residues 1240 to 1260; the sequence is PVFLVYDFMLLLCASLQRQIF. The Cytoplasmic portion of the chain corresponds to 1261–1314; the sequence is EDENKAAVRIMAGDNVEICMNLDAASFSQHNPVPDFIHCRSYLDMSKVIIFSYL. A helical membrane pass occupies residues 1315–1327; that stretch reads FWFVLTIIFITGT. Topologically, residues 1328–1333 are extracellular; that stretch reads TRISIF. Residues 1334-1346 traverse the membrane as a helical segment; it reads CMGYLVACFYFLL. At 1347 to 1355 the chain is on the cytoplasmic side; it reads FGGDLLLKP. Residues 1356-1381 traverse the membrane as a helical segment; the sequence is IKSILRYWDWLIAYNVFVITMKNILS. The Extracellular portion of the chain corresponds to 1382-1430; the sequence is IGACGYIGALVRNSCWLIQAFSLACTVKGYQMPEDDSRCKLPSGEAGII. A helical transmembrane segment spans residues 1431–1447; sequence WDSICFAFLLLQRRVFM. Residues 1448–1991 are Cytoplasmic-facing; it reads SYYFLHVVAD…YAMYNTLVAR (544 aa). Positions 1475–1515 form a coiled coil; that stretch reads TIVKAVKARIEEEKKSMDQLKRQMDRIKARQQKYKKGKERM. Disordered regions lie at residues 1505–1551 and 1611–1653; these read QQKY…KKKQ and LRQR…KKSD. The segment covering 1611–1621 has biased composition (basic residues); the sequence is LRQRRKEKKKL. Basic and acidic residues predominate over residues 1622-1633; sequence AREEQKERRKGS. A helical membrane pass occupies residues 1992-2006; that stretch reads SEMVCYFVIILNHMT. Residues 2007–2013 are Extracellular-facing; it reads SASIITL. The helical transmembrane segment at 2014–2025 threads the bilayer; the sequence is LLPILIFLWAML. Over 2026–2031 the chain is Cytoplasmic; it reads SVPRPS. A helical membrane pass occupies residues 2032–2053; sequence RRFWMMAIVYTEVAIVVKYFFQ. Residues 2054–2086 lie on the Extracellular side of the membrane; the sequence is FGFFPWNKDLEIYKERPYFPPNIIGVEKKEGYV. A helical membrane pass occupies residues 2087–2105; it reads LYDLIQLLALFFHRSILKC. Over 2106–2259 the chain is Cytoplasmic; it reads HGLWDEDDIV…HPDYSAVTDV (154 aa). Disordered regions lie at residues 2120-2139 and 2164-2205; these read DKEG…GSSD and IRRK…SVLS. Over residues 2170–2197 the composition is skewed to low complexity; the sequence is CSSSQISPRSSFSSNRSKRGSTSTRNSS. The chain crosses the membrane as a helical span at residues 2260–2279; that stretch reads YVLMFLADTVDFIIIVFGFW. The Extracellular segment spans residues 2280 to 2301; it reads AFGKHSAAADITSSLSEDQVPG. Residues 2302 to 2322 traverse the membrane as a helical segment; the sequence is PFLVMVLIQFGTMVVDRALYL. The Cytoplasmic segment spans residues 2323–2326; the sequence is RKTV. The helical transmembrane segment at 2327–2350 threads the bilayer; the sequence is LGKVIFQVILVFGIHFWMFFILPG. Over 2351-2359 the chain is Extracellular; the sequence is VTERKFSQN. Residues 2360 to 2382 traverse the membrane as a helical segment; the sequence is LVAQLWYFVKCVYFGLSAYQIRC. Residues 2383–2467 are Cytoplasmic-facing; that stretch reads GYPTRVLGNF…YPQPRGQKKK (85 aa). A helical membrane pass occupies residues 2468 to 2491; it reads KAVKYGMGGMIIVLLICIVWFPLL. The Extracellular portion of the chain corresponds to 2492-2739; sequence FMSLIKSVAG…PSLGFLAGYG (248 aa). Asn2692 carries N-linked (GlcNAc...) asparagine glycosylation. The chain crosses the membrane as a helical span at residues 2740 to 2760; that stretch reads IMGLYASVVLVIGKFVREFFS. The Cytoplasmic segment spans residues 2761–2822; sequence GISHSIMFEE…MIKWTREKTN (62 aa).

This sequence belongs to the PIEZO (TC 1.A.75) family. Homotrimer; the homotrimer forms a propeller-shaped Piezo channel with a cation-ion conducting pore. Heterotrimeric interaction may occur between PIEZO1 and PIEZO2. Interacts with STOM13. Interacts with TMC7; the interaction inhibits PIEZO2-conducted mechanically activated currents. Interacts with TMC1; the interaction may be part of the MET complex. Interacts with MDFIC (via C-terminus); the interaction prolongs Piezo channel inactivation. Interacts with MDFI (via C-terminus); the interaction prolongs Piezo channel inactivation. As to expression, expressed in bladder, colon, and lung, but less abundant in kidney or skin. Strong expression is observed in dorsal root ganglia (DRG) sensory neurons. Expressed in a wide range of cutaneous low-threshold mechanoreceptors (LTMRs), including Merkel cells and Meissner's corpuscles. Expressed in sensory neurons. Expressed in cochlear inner and outer hair cells and vestibular organ hair cells. Expressed in pulmonary neuroepithelial cell bodies. Expressed in bladder urothelium and sensory neurons of the lower urinary tract. Expressed in sensory endings of proprioceptors innervating muscle spindles and Golgi tendon organs.

The protein resides in the cell membrane. It carries out the reaction Ca(2+)(in) = Ca(2+)(out). Regulated by auxillary subunits MDFIC and MDFI. Channel activity is inhibited by TMEM120aa. Phosphatidic acid and lysophosphatidic acid inhibit Piezo2 channel activity. In terms of biological role, pore-forming subunit of the mechanosensitive non-specific cation Piezo channel required for rapidly adapting mechanically activated (MA) currents and has a key role in sensing touch and tactile pain. Piezo channels are homotrimeric three-blade propeller-shaped structures that utilize a cap-motion and plug-and-latch mechanism to gate their ion-conducting pathways. Expressed in sensory neurons, is essential for diverse physiological processes, including respiratory control, systemic metabolism, urinary function, and proprioception. Mediates airway stretch sensing, enabling efficient respiration at birth and maintaining normal breathing in adults. It regulates brown and beige adipose tissue morphology and function, preventing systemic hypermetabolism. In the lower urinary tract, acts as a sensor in both the bladder urothelium and innervating sensory neurons and is required for bladder-stretch sensing and urethral micturition reflexes, ensuring proper urinary function. Additionally, Piezo2 serves as the principal mechanotransducer in proprioceptors, facilitating proprioception and coordinated body movements. In inner ear hair cells, PIEZO1/2 subunits may constitute part of the mechanotransducer (MET) non-selective cation channel complex where they may act as pore-forming ion-conducting component in the complex. Required for Merkel-cell mechanotransduction. Plays a major role in light-touch mechanosensation. This chain is Piezo-type mechanosensitive ion channel component 2, found in Mus musculus (Mouse).